The sequence spans 308 residues: Thiohydrolase (308 aa).

Belongs to the polyketide transferase af380 family.

It participates in mycotoxin biosynthesis. Its function is as follows. Thiohydrolase; part of the gene cluster that mediates the biosynthesis of brefeldin A (BFA), a protein transport inhibitor that shows antiviral, antifungal, and antitumor properties. The proposed biosynthesis of BFA involves formation of an acyclic polyketide chain that is differentially tailored throughout the backbone. The highly reducing polyketide synthase Bref-PKS is proposed to synthesize the precisely reduced octaketide precursor, which could then be directly offloaded by the thiohydrolase enzyme Bref-TH followed by a cytochrome P450 monooxygenase-mediated formation of the cyclopentane ring and macrocyclization to afford 7-deoxy BFA. Alternatively, the first ring annulation can also occur on the ACP-tethered intermediate before the thiohydrolase release and lactonization. The C7-hydroxylation by another cytochrome P450 monooxygenase is believed to be the final step in the process to obtain the final structure of BFA. In addition to the HRPKS Bref-PKS and the thiohydrolase Bref-TH, the brefeldin A biosynthesis cluster contains 4 cytochrome p450 monooxygenases (called orf3 to orf6), as well a the probable cluster-specific transcription regulator orf8. This chain is Thiohydrolase, found in Eupenicillium brefeldianum (Penicillium brefeldianum).